The sequence spans 488 residues: Ribulose bisphosphate carboxylase large chain (488 aa).

Positions 127 and 177 each coordinate substrate. K179 functions as the Proton acceptor in the catalytic mechanism. K181 is a substrate binding site. K205, D207, and E208 together coordinate Mg(2+). K205 carries the post-translational modification N6-carboxylysine. H297 functions as the Proton acceptor in the catalytic mechanism. The substrate site is built by R298, H330, and S382.

Belongs to the RuBisCO large chain family. Type I subfamily. Heterohexadecamer of 8 large chains and 8 small chains. The cofactor is Mg(2+).

The protein resides in the plastid. Its subcellular location is the chloroplast. It carries out the reaction 2 (2R)-3-phosphoglycerate + 2 H(+) = D-ribulose 1,5-bisphosphate + CO2 + H2O. The catalysed reaction is D-ribulose 1,5-bisphosphate + O2 = 2-phosphoglycolate + (2R)-3-phosphoglycerate + 2 H(+). In terms of biological role, ruBisCO catalyzes two reactions: the carboxylation of D-ribulose 1,5-bisphosphate, the primary event in carbon dioxide fixation, as well as the oxidative fragmentation of the pentose substrate in the photorespiration process. Both reactions occur simultaneously and in competition at the same active site. The chain is Ribulose bisphosphate carboxylase large chain from Pylaiella littoralis (Seaweed).